Here is a 149-residue protein sequence, read N- to C-terminus: Arginine repressor (149 aa).

This sequence belongs to the ArgR family.

The protein resides in the cytoplasm. It participates in amino-acid biosynthesis; L-arginine biosynthesis [regulation]. In terms of biological role, regulates arginine biosynthesis genes. This chain is Arginine repressor, found in Bacillus cereus (strain ATCC 10987 / NRS 248).